The sequence spans 901 residues: Alpha-actinin-3 (901 aa).

Position 1 is an N-acetylmethionine (M1). The interval 1-261 (MMMVLQPEGL…IMTYVSCFYH (261 aa)) is actin-binding. 2 Calponin-homology (CH) domains span residues 45-149 (KQQR…LRFA) and 158-264 (TSAK…HAFA). Spectrin repeat units follow at residues 288-398 (KLME…WLLS), 408-513 (HLAE…ALER), 523-634 (QLQL…MLQE), and 644-747 (RLRR…EVEN). 2 consecutive EF-hand domains span residues 760-795 (EQLN…MGYD) and 796-831 (LGEV…ETAE). Ca(2+) contacts are provided by D773, N777, M779, D784, D809, and N811.

It belongs to the alpha-actinin family. Homodimer; antiparallel. Also forms heterodimers with ACTN2. Interacts with MYOZ1.

F-actin cross-linking protein which is thought to anchor actin to a variety of intracellular structures. This is a bundling protein. This is Alpha-actinin-3 (ACTN3) from Bos taurus (Bovine).